Reading from the N-terminus, the 422-residue chain is Beta-1,3-galactosyltransferase 2 (422 aa).

At 1-20 (MLQWRRRHCCFAKMTWSPKR) the chain is on the cytoplasmic side. A helical; Signal-anchor for type II membrane protein membrane pass occupies residues 21–43 (SLLRTPLTGVLSLVFLFAMFLFF). At 44–422 (NHHDWLPGRP…AGRYRHRKLH (379 aa)) the chain is on the lumenal side. Residues asparagine 75, asparagine 98, asparagine 119, asparagine 176, and asparagine 226 are each glycosylated (N-linked (GlcNAc...) asparagine). Positions 91–110 (LRPHTASNSSNTELSPQGVT) are disordered. The span at 95 to 110 (TASNSSNTELSPQGVT) shows a compositional bias: polar residues.

Belongs to the glycosyltransferase 31 family. It depends on Mn(2+) as a cofactor. Detected in brain and heart.

Its subcellular location is the golgi apparatus membrane. The catalysed reaction is an N-acetyl-beta-D-glucosaminyl derivative + UDP-alpha-D-galactose = a beta-D-galactosyl-(1-&gt;3)-N-acetyl-beta-D-glucosaminyl derivative + UDP + H(+). The enzyme catalyses a beta-D-GlcNAc-(1-&gt;3)-beta-D-Gal-(1-&gt;4)-beta-D-Glc-(1&lt;-&gt;1)-Cer(d18:1(4E)) + UDP-alpha-D-galactose = a beta-D-Gal-(1-&gt;3)-beta-D-GlcNAc-(1-&gt;3)-beta-D-Gal-(1-&gt;4)-beta-D-Glc-(1&lt;-&gt;1')-Cer(d18:1(4E)) + UDP + H(+). It catalyses the reaction a neolactoside IV(3)-beta-GlcNAc-nLc4Cer(d18:1(4E)) + UDP-alpha-D-galactose = a neolactoside IV(3)-beta-[Gal-beta-(1-&gt;3)-GlcNAc]-nLc4Cer(d18:1(4E)) + UDP + H(+). It participates in protein modification; protein glycosylation. Functionally, beta-1,3-galactosyltransferase that transfers galactose from UDP-galactose to substrates with a terminal beta-N-acetylglucosamine (beta-GlcNAc) residue. Can also utilize substrates with a terminal galactose residue, albeit with lower efficiency. Involved in the biosynthesis of the carbohydrate moieties of glycolipids and glycoproteins. This chain is Beta-1,3-galactosyltransferase 2, found in Mus musculus (Mouse).